An 853-amino-acid chain; its full sequence is DNA mismatch repair protein MutS (853 aa).

616-623 (GPNMGGKS) is an ATP binding site.

Belongs to the DNA mismatch repair MutS family.

Functionally, this protein is involved in the repair of mismatches in DNA. It is possible that it carries out the mismatch recognition step. This protein has a weak ATPase activity. This is DNA mismatch repair protein MutS from Erwinia tasmaniensis (strain DSM 17950 / CFBP 7177 / CIP 109463 / NCPPB 4357 / Et1/99).